Here is a 1890-residue protein sequence, read N- to C-terminus: Putative aminopeptidase-2 (1890 aa).

Positions 1–20 are cleaved as a signal peptide; it reads MRRKLLLLLCFIGLFSLIST. N-linked (GlcNAc...) asparagine glycosylation occurs at Asn-110. Substrate-binding positions include Glu-220 and 354–358; that span reads GAMEN. His-390 contacts Zn(2+). Glu-391 acts as the Proton acceptor in catalysis. His-394 and Glu-413 together coordinate Zn(2+). 7 N-linked (GlcNAc...) asparagine glycosylation sites follow: Asn-534, Asn-581, Asn-785, Asn-803, Asn-914, Asn-1024, and Asn-1094. Glu-1143 serves as a coordination point for substrate. N-linked (GlcNAc...) asparagine glycosylation is present at Asn-1245. 1280–1284 is a substrate binding site; it reads GAMEN. His-1316 is a binding site for Zn(2+). Glu-1317 acts as the Proton acceptor in catalysis. Zn(2+) is bound by residues His-1320 and Glu-1339. N-linked (GlcNAc...) asparagine glycosylation is found at Asn-1451, Asn-1521, Asn-1826, and Asn-1841.

This sequence belongs to the peptidase M1 family. Zn(2+) serves as cofactor.

Its function is as follows. Putative aminopeptidase which plays a role in oocyte maturation. The polypeptide is Putative aminopeptidase-2 (Caenorhabditis elegans).